The chain runs to 87 residues: Translation initiation factor IF-1 2 (87 aa).

The S1-like domain maps to 1-72 (MAKEELLEMQ…SKGRITFRHI (72 aa)).

This sequence belongs to the IF-1 family. Component of the 30S ribosomal translation pre-initiation complex which assembles on the 30S ribosome in the order IF-2 and IF-3, IF-1 and N-formylmethionyl-tRNA(fMet); mRNA recruitment can occur at any time during PIC assembly.

The protein resides in the cytoplasm. Its function is as follows. One of the essential components for the initiation of protein synthesis. Stabilizes the binding of IF-2 and IF-3 on the 30S subunit to which N-formylmethionyl-tRNA(fMet) subsequently binds. Helps modulate mRNA selection, yielding the 30S pre-initiation complex (PIC). Upon addition of the 50S ribosomal subunit IF-1, IF-2 and IF-3 are released leaving the mature 70S translation initiation complex. This chain is Translation initiation factor IF-1 2, found in Dechloromonas aromatica (strain RCB).